The primary structure comprises 536 residues: G-protein coupled receptor Mth2 (536 aa).

Residues 1–210 (MAERDHYHTI…DDNSTVKIIN (210 aa)) lie on the Extracellular side of the membrane. Cystine bridges form between Cys17–Cys71, Cys73–Cys78, Cys82–Cys177, Cys83–Cys96, and Cys138–Cys197. 2 N-linked (GlcNAc...) asparagine glycosylation sites follow: Asn24 and Asn33. N-linked (GlcNAc...) asparagine glycosylation is found at Asn103, Asn113, Asn118, Asn159, Asn184, and Asn203. Residues 211 to 231 (AYAMMFSIPFMMLTIAVYLLI) form a helical membrane-spanning segment. Residues 232-241 (PELRNQHGKS) are Cytoplasmic-facing. Residues 242 to 262 (LVCYLVGLTVGYTSLCYVQLY) form a helical membrane-spanning segment. Over 263–273 (QVDATGDACKV) the chain is Extracellular. The helical transmembrane segment at 274 to 294 (FGYTAYFFFMGAYMWLSVISF) threads the bilayer. At 295 to 314 (DLWHNFRGTRGINRFQEKKR) the chain is on the cytoplasmic side. A helical transmembrane segment spans residues 315–335 (FLFYSLYSWGIAVVFLAFTYI). Residues 336 to 365 (AQELTNLPAYLKPGIGDGVYCWLDMSNWAA) lie on the Extracellular side of the membrane. A helical transmembrane segment spans residues 366–386 (MIYFYGPILVIVVANTIMFIM). Residues 387-417 (TAIKIHGVQREMARIIASENSTKNLRTEKDK) lie on the Cytoplasmic side of the membrane. A helical membrane pass occupies residues 418–438 (FGLFLRLFLIMGITWLTELIS). Topologically, residues 439 to 449 (YFVGSDKGWSK) are extracellular. Residues 450–470 (LFYISDLANAMQGFLIFMLFV) form a helical membrane-spanning segment. Residues 471 to 536 (MKKKVKHLIT…VDPQKTTIFR (66 aa)) are Cytoplasmic-facing. Residues 487-506 (RDGSNQRQSQYSTKTTSSSV) are disordered. Residues 492-505 (QRQSQYSTKTTSSS) are compositionally biased toward low complexity.

This sequence belongs to the G-protein coupled receptor 2 family. Mth subfamily. Homodimer.

The protein resides in the cell membrane. In terms of biological role, involved in biological aging and stress response. Essential for adult survival. This chain is G-protein coupled receptor Mth2 (mth2), found in Drosophila yakuba (Fruit fly).